The following is a 132-amino-acid chain: Small ribosomal subunit protein uS8 (132 aa).

This sequence belongs to the universal ribosomal protein uS8 family. In terms of assembly, part of the 30S ribosomal subunit. Contacts proteins S5 and S12.

In terms of biological role, one of the primary rRNA binding proteins, it binds directly to 16S rRNA central domain where it helps coordinate assembly of the platform of the 30S subunit. The protein is Small ribosomal subunit protein uS8 of Treponema pallidum (strain Nichols).